The primary structure comprises 304 residues: Acetylglutamate kinase (304 aa).

Substrate-binding positions include 82 to 83 (GG), arginine 104, and asparagine 197.

The protein belongs to the acetylglutamate kinase family. ArgB subfamily.

It is found in the cytoplasm. It carries out the reaction N-acetyl-L-glutamate + ATP = N-acetyl-L-glutamyl 5-phosphate + ADP. Its pathway is amino-acid biosynthesis; L-arginine biosynthesis; N(2)-acetyl-L-ornithine from L-glutamate: step 2/4. Catalyzes the ATP-dependent phosphorylation of N-acetyl-L-glutamate. This is Acetylglutamate kinase from Prochlorococcus marinus (strain NATL1A).